Reading from the N-terminus, the 423-residue chain is Probable electron transfer flavoprotein-quinone oxidoreductase YgcN (423 aa).

7-21 lines the FAD pocket; that stretch reads IIIIGAGIAGTACAL.

This sequence belongs to the ETF-QO/FixC family. It depends on FAD as a cofactor.

In terms of biological role, probably accepts electrons from YgcQ/YgcR and reduces a quinone. The sequence is that of Probable electron transfer flavoprotein-quinone oxidoreductase YgcN (ygcN) from Escherichia coli (strain K12).